Reading from the N-terminus, the 1155-residue chain is Cilia- and flagella-associated protein 251 (1155 aa).

Basic and acidic residues-rich tracts occupy residues 1–19 and 31–59; these read MSDAEEAPREATRENGETE and KEVEDPQQESKDDTLAWRESQEEERKTGE. Disordered regions lie at residues 1 to 144 and 167 to 225; these read MSDA…KLSL and LDQI…DIQS. Over residues 60 to 69 the composition is skewed to acidic residues; the sequence is EEGEEEEEKE. The segment covering 70–95 has biased composition (basic and acidic residues); it reads EEGKKDKKIVMEETEEKAGESQEKEA. Residues 99-111 are compositionally biased toward low complexity; sequence QEETTVEPQEVTE. 2 stretches are compositionally biased toward polar residues: residues 118-128 and 172-182; these read TQITDSQSVTS and PEEQQISSPER. Basic and acidic residues predominate over residues 201–220; sequence GQERRDLEPENREEGQERTV. 14 WD repeats span residues 341–383, 391–431, 442–481, 499–534, 537–597, 601–641, 647–684, 694–730, 737–780, 791–831, 837–883, 889–927, 965–1005, and 1025–1065; these read PVHT…IWKW, ACTL…AWYE, LLTEKTFNKLVGKFSQSVFHLNLTQILSATMEGKLVVWDI, PCKLVHLQKEGITVLTTTDSYIVTGDIKGNIKFYDH, SIVN…VYHL, GTKL…VWNY, LFSRVFEKGLGVQSLTYNPEGALLGAGFTEGTVYILDA, PFKYSRTSVTHISFSHDSQYMATADRSFTVAVYMLVV, WEYL…GYDL, LDIH…LFNA, RKTL…ILPV, KTSAIVCHPNGVAGMAVSYDGHYAFTAGGHDRSVVQWKI, YFYY…FYPS, and GKLI…GYTN.

Its subcellular location is the cytoplasm. The protein resides in the cytoskeleton. The protein localises to the cilium axoneme. It is found in the cell projection. It localises to the cilium. Its subcellular location is the flagellum. Involved in spermatozoa motility. May also regulate cilium motility through its role in the assembly of the axonemal radial spokes. In Pongo abelii (Sumatran orangutan), this protein is Cilia- and flagella-associated protein 251.